The sequence spans 477 residues: Glycogen synthase (477 aa).

Lys15 serves as a coordination point for ADP-alpha-D-glucose.

Belongs to the glycosyltransferase 1 family. Bacterial/plant glycogen synthase subfamily.

It catalyses the reaction [(1-&gt;4)-alpha-D-glucosyl](n) + ADP-alpha-D-glucose = [(1-&gt;4)-alpha-D-glucosyl](n+1) + ADP + H(+). The protein operates within glycan biosynthesis; glycogen biosynthesis. In terms of biological role, synthesizes alpha-1,4-glucan chains using ADP-glucose. The polypeptide is Glycogen synthase (Shigella boydii serotype 4 (strain Sb227)).